An 81-amino-acid polypeptide reads, in one-letter code: Putative defensin-like protein 102 (81 aa).

Residues 1–24 (MTTTMKTFVAFVLTVFFIMSSAHC) form the signal peptide. Intrachain disulfides connect C43–C78, C49–C71, C57–C76, and C61–C77.

Belongs to the DEFL family.

Its subcellular location is the secreted. The polypeptide is Putative defensin-like protein 102 (Arabidopsis thaliana (Mouse-ear cress)).